The sequence spans 154 residues: Transcriptional repressor NrdR (154 aa).

A zinc finger lies at Cys3–Cys34. The region spanning Pro49–Glu139 is the ATP-cone domain.

This sequence belongs to the NrdR family. It depends on Zn(2+) as a cofactor.

Its function is as follows. Negatively regulates transcription of bacterial ribonucleotide reductase nrd genes and operons by binding to NrdR-boxes. The protein is Transcriptional repressor NrdR of Pseudomonas fluorescens (strain ATCC BAA-477 / NRRL B-23932 / Pf-5).